The primary structure comprises 57 residues: Small ribosomal subunit protein bS21 (57 aa).

The tract at residues 35–57 is disordered; that stretch reads RERYEKPSLRRKRKQEAARKRNR.

This sequence belongs to the bacterial ribosomal protein bS21 family.

The polypeptide is Small ribosomal subunit protein bS21 (Thermosynechococcus vestitus (strain NIES-2133 / IAM M-273 / BP-1)).